A 352-amino-acid polypeptide reads, in one-letter code: Transcription factor BHLH156 (352 aa).

The segment at 59–141 (GGDDDDNGGV…RSKTIVSERK (83 aa)) is disordered. The interval 130–143 (RDRSKTIVSERKRR) is basic motif. The bHLH domain maps to 130–179 (RDRSKTIVSERKRRVRMKEKLYELRALVPNITKMDKASIIADAVVYVKDL). The tract at residues 144–179 (VRMKEKLYELRALVPNITKMDKASIIADAVVYVKDL) is helix-loop-helix motif. The interval 194–216 (EEARPIRPPPPSAAAQRPQRQPR) is disordered. A compositionally biased stretch (low complexity) spans 206–216 (AAAQRPQRQPR).

The protein belongs to the bHLH protein family. In terms of assembly, forms homodimers. Interacts with IRO2 in the nucleus. Expressed in the meristematic zone of lateral and primary roots.

Its subcellular location is the nucleus. Transcription factor involved in positive regulation of genes involved in strategy II iron acquisition, including genes for mugineic acid (MA) family phytosiderophores biosynthesis, and genes involved in S-adenosylmethionine cycle and iron transport. May play a role in the regulation of iron deficiency response by promoting the nuclear localization of IRO2. Possesses transactivation activity in yeast. This is Transcription factor BHLH156 from Oryza sativa subsp. japonica (Rice).